Reading from the N-terminus, the 202-residue chain is MSEAIAIAAELRDGSGKGAARATRRAGKVPGVIYGDKKAAICIQMDPRVVWAQISKTGFFTQLFNVDLGKDGKHLCLARDVQMHPVTDQPIHVDFMRVSADHAIHVKVPVHFTNELKSPGIKKGGVLNVELHEIEITCSPNDIPHEILIDLDGLEIGASIHLSDLKLPAGAKPYHVASGATVASIAAPTVARAETTETEAAG.

The protein belongs to the bacterial ribosomal protein bL25 family. CTC subfamily. As to quaternary structure, part of the 50S ribosomal subunit; part of the 5S rRNA/L5/L18/L25 subcomplex. Contacts the 5S rRNA. Binds to the 5S rRNA independently of L5 and L18.

Its function is as follows. This is one of the proteins that binds to the 5S RNA in the ribosome where it forms part of the central protuberance. The chain is Large ribosomal subunit protein bL25 from Paramagnetospirillum magneticum (strain ATCC 700264 / AMB-1) (Magnetospirillum magneticum).